Consider the following 88-residue polypeptide: Sec-independent protein translocase protein TatA (88 aa).

The helical transmembrane segment at 3–23 (IFGVGLPEVTVILILALLIFG) threads the bilayer. Residues 56 to 88 (MNEQDKDESPISIESNQTNEINQEKIDSENSKK) are disordered. Polar residues predominate over residues 67-76 (SIESNQTNEI). A compositionally biased stretch (basic and acidic residues) spans 77–88 (NQEKIDSENSKK).

This sequence belongs to the TatA/E family. In terms of assembly, forms a complex with TatC.

Its subcellular location is the cell inner membrane. Part of the twin-arginine translocation (Tat) system that transports large folded proteins containing a characteristic twin-arginine motif in their signal peptide across membranes. TatA could form the protein-conducting channel of the Tat system. This is Sec-independent protein translocase protein TatA from Prochlorococcus marinus (strain AS9601).